The chain runs to 85 residues: Beta-defensin 18 (85 aa).

Residues 1-23 (MQSTMKMFGIILMVIFSVSCGPS) form the signal peptide. 3 disulfide bridges follow: Cys-39–Cys-65, Cys-46–Cys-60, and Cys-50–Cys-66.

The protein belongs to the beta-defensin family.

It is found in the secreted. In terms of biological role, has antibacterial activity. This is Beta-defensin 18 (Defb18) from Mus musculus (Mouse).